The chain runs to 481 residues: UDP-glycosyltransferase 85C2 (481 aa).

His-23 functions as the Proton acceptor in the catalytic mechanism. His-23 contributes to the an anthocyanidin binding site. The active-site Charge relay is Asp-120. 8 residues coordinate UDP-alpha-D-glucose: Thr-143, Gln-362, His-377, Trp-380, Ser-382, Glu-385, Asp-401, and Gln-402.

This sequence belongs to the UDP-glycosyltransferase family.

It catalyses the reaction steviol + UDP-alpha-D-glucose = steviolmonoside + UDP + H(+). The enzyme catalyses steviolmonoside + UDP-alpha-D-glucose = rubusoside + UDP. In terms of biological role, involved in the biosynthesis of steviol glycosides in leaves. Converts steviol to the mono-glycoside steviolmonoside. Converts the mono-glycoside steviolmonoside to the bi-glycoside rubusoside. The sequence is that of UDP-glycosyltransferase 85C2 from Stevia rebaudiana (Stevia).